A 327-amino-acid polypeptide reads, in one-letter code: F-box/LRR-repeat protein At3g58900 (327 aa).

In terms of domain architecture, F-box spans 1-47 (MDLFSSLPNELLYHILSFLSTKEAALTSVLSKRWRNLFAFVPYLEFD). LRR repeat units lie at residues 116–144 (DLFI…RVGS), 161–192 (KTLV…DMTN), 199–230 (NVTV…SFDA), 235–261 (YFYY…QINL), and 277–308 (EMLV…YLSP).

The chain is F-box/LRR-repeat protein At3g58900 from Arabidopsis thaliana (Mouse-ear cress).